The primary structure comprises 211 residues: Eukaryotic translation initiation factor 4E (211 aa).

The protein belongs to the eukaryotic initiation factor 4E family. In terms of assembly, eIF4F is a multi-subunit complex, the composition of which varies with external and internal environmental conditions. It is composed of at least eIF4A, eIF4E and eIF4G. eIF4E is also known to interact with other partners.

In terms of biological role, recognizes and binds the 7-methylguanosine-containing mRNA cap during an early step in the initiation of protein synthesis and facilitates ribosome binding by inducing the unwinding of the mRNAs secondary structures. This Eremothecium gossypii (strain ATCC 10895 / CBS 109.51 / FGSC 9923 / NRRL Y-1056) (Yeast) protein is Eukaryotic translation initiation factor 4E (TIF45).